The primary structure comprises 390 residues: Lipid-A-disaccharide synthase (390 aa).

It belongs to the LpxB family.

The catalysed reaction is a lipid X + a UDP-2-N,3-O-bis[(3R)-3-hydroxyacyl]-alpha-D-glucosamine = a lipid A disaccharide + UDP + H(+). It participates in bacterial outer membrane biogenesis; LPS lipid A biosynthesis. Functionally, condensation of UDP-2,3-diacylglucosamine and 2,3-diacylglucosamine-1-phosphate to form lipid A disaccharide, a precursor of lipid A, a phosphorylated glycolipid that anchors the lipopolysaccharide to the outer membrane of the cell. The chain is Lipid-A-disaccharide synthase from Haemophilus influenzae (strain PittGG).